Here is a 175-residue protein sequence, read N- to C-terminus: R-phycoerythrin subunit beta (175 aa).

Cys-82 contacts (2R,3E)-phycoerythrobilin.

It belongs to the phycobiliprotein family. Homodimer. In terms of processing, contains one covalently linked phycoerythrobilin chromophore.

Green-light absorbing phycoerythrin of unknown function. This chain is R-phycoerythrin subunit beta (cpeB), found in Prochlorococcus marinus subsp. pastoris (strain CCMP1986 / NIES-2087 / MED4).